The sequence spans 528 residues: MGQEMSTQSDMQNENQKGNKRNLKGSQGKNGLKERSTSISKEIVKNSFNNSKLRPGMFIQNSNVVFNEQYKGIKILGKGSFGEVILSKDKHTGHEYAIKVISKKHVKRKTDKQSLLREVELLKMLDHINIMKLYEFFEDNNYYYLVSDVYSGGELFDEIISRKRFYEVDAARIIKQVLSGITYMHKNNVVHRDLKPENILLETKNKEDMIIKIIDFGLSTHFEYSKKMKDKIGTAYYIAPDVLHGTYDEKCDIWSCGVILYILLSGCPPFNGSNEYDILKKVETGKYTFDLPQFKKISDKAKDLIKKMLMYTSAVRISARDALEHEWIRLMTSKDNVNIDIPSLELSITNIKQFQSTQKLAQAALLYMGSKLTTIDETKELTKIFKKMDKNGDGQLDRNELIIGYKELLKLKGDDTTDLDNAAIEVEVDQILSSIDLDQNGYIEYSEFLTVAIDRKLLLSTERLEKAFKLFDKDGSGKISANELAQLFGLGDVSSDCWKTVLKEVDQNNDGEIDFKEFRDMLIKLCNY.

The segment covering 1–16 (MGQEMSTQSDMQNENQ) has biased composition (polar residues). A disordered region spans residues 1–36 (MGQEMSTQSDMQNENQKGNKRNLKGSQGKNGLKERS). Residue glycine 2 is the site of N-myristoyl glycine attachment. The 259-residue stretch at 70–328 (YKGIKILGKG…ARDALEHEWI (259 aa)) folds into the Protein kinase domain. ATP-binding positions include 76-84 (LGKGSFGEV) and lysine 99. Aspartate 193 functions as the Proton acceptor in the catalytic mechanism. Residues 350 to 358 (NIKQFQSTQ) carry the J domain autoinhibitory motif motif. The segment at 350 to 386 (NIKQFQSTQKLAQAALLYMGSKLTTIDETKELTKIFK) is j domain. The J domain EF-hand interaction motif signature appears at 359 to 368 (KLAQAALLYM). EF-hand domains are found at residues 376–411 (DETK…LLKL), 423–458 (AIEV…RKLL), 459–494 (LSTE…GDVS), and 498–528 (WKTV…LCNY). Aspartate 389, asparagine 391, aspartate 393, glutamine 395, glutamate 400, aspartate 436, aspartate 438, asparagine 440, tyrosine 442, glutamate 447, aspartate 472, aspartate 474, serine 476, lysine 478, glutamate 483, aspartate 506, asparagine 508, aspartate 510, glutamate 512, and glutamate 517 together coordinate Ca(2+).

The protein belongs to the protein kinase superfamily. Ser/Thr protein kinase family. CDPK subfamily. May interact with the pre-replication MCM complex prior male gametogenesis activation. Mg(2+) is required as a cofactor. Myristoylated; myristoylation may target it to different subcellular compartments. During male gametogenesis, myristoylation is required to initiate DNA replication but not for mitotic spindle assembly or axoneme activation. Post-translationally, not palmitoylated. In terms of processing, may be autophosphorylated on Thr-234 in vitro.

The protein localises to the cytoplasm. It localises to the membrane. The protein resides in the chromosome. It carries out the reaction L-seryl-[protein] + ATP = O-phospho-L-seryl-[protein] + ADP + H(+). The enzyme catalyses L-threonyl-[protein] + ATP = O-phospho-L-threonyl-[protein] + ADP + H(+). Its activity is regulated as follows. Activated by calcium. Upon calcium binding to the EF-hand domains, the C-terminus of the junction domain (J domain) undergoes a conformational change which results in the dissociation of the pseudo-substrate inhibitory motif from the catalytic domain. This, in turn, may facilitate the autophosphorylation of the activation loop at Thr-234, which leads to the kinase activation. Intracellular calcium increase is triggered by xanthurenic acid (XA), a small mosquito molecule that induces the differentiation of specialized transmission stages, the gametocytes, into male and female gametes. Activated by a decrease in temperature (20 degrees Celsius) and an increase in pH (7.6) occurring when the parasite is ingested by in the mosquito. Functionally, calcium-dependent protein kinase which acts as a sensor and effector of intracellular Ca(2+) levels probably in part downstream of cGMP-activated PKG kinase. Plays a central role in the host erythrocytes and hepatocytes infection cycles, sexual reproduction and mosquito transmission of the parasite. During the liver stage, involved in sporozoite motility and thus in sporozoite invasion of host hepatocytes, probably together with CDPK1 and CDPK5. Involved in merosome egress from host hepatocytes, probably together with CDPK5. During the asexual blood stage, involved in merozoite invasion of host erythrocytes and motility by stabilizing the inner membrane complex, a structure below the plasma membrane which acts as an anchor for the glidosome, an acto-myosin motor. Required for cell cycle progression in the male gametocyte. During male gametogenesis in the mosquito gut, required to initiate the first round of DNA replication, probably by facilitating the assembly of the pre-replicative MCM complex, to assemble the first mitotic spindle and, at the end of gametogenesis, to initiate axoneme motility, cytokinesis and subsequent exflagellation. For each of these steps, may phosphorylate SOC1, SOC2 and SOC3, respectively. Together with CDPK1, regulates ookinete gliding in the mosquito host midgut. Its function is as follows. During male gametogenesis in the mosquito gut, required to initiate the first round of DNA replication, probably by facilitating the assembly of the pre-replicative MCM complex, and to assemble the first mitotic spindle. In terms of biological role, at the end of male gametogenesis in the mosquito gut, required to initiate axoneme motility, cytokinesis and subsequent exflagellation. The polypeptide is Calcium-dependent protein kinase 4 (Plasmodium berghei (strain Anka)).